The following is a 105-amino-acid chain: T cell receptor alpha variable 40 (105 aa).

A signal peptide spans 1–19 (MNSSLDFLILILMFGGTSS). The 86-residue stretch at 20-105 (NSVKQTGQIT…DSAVYYCLLG (86 aa)) folds into the Ig-like domain. The N-linked (GlcNAc...) asparagine glycan is linked to asparagine 39. Residues cysteine 40 and cysteine 102 are joined by a disulfide bond.

Alpha-beta TR is a heterodimer composed of an alpha and beta chain; disulfide-linked. The alpha-beta TR is associated with the transmembrane signaling CD3 coreceptor proteins to form the TR-CD3 (TcR or TCR). The assembly of alpha-beta TR heterodimers with CD3 occurs in the endoplasmic reticulum where a single alpha-beta TR heterodimer associates with one CD3D-CD3E heterodimer, one CD3G-CD3E heterodimer and one CD247 homodimer forming a stable octameric structure. CD3D-CD3E and CD3G-CD3E heterodimers preferentially associate with TR alpha and TR beta chains, respectively. The association of the CD247 homodimer is the last step of TcR assembly in the endoplasmic reticulum and is required for transport to the cell surface.

It is found in the cell membrane. Functionally, v region of the variable domain of T cell receptor (TR) alpha chain that participates in the antigen recognition. Alpha-beta T cell receptors are antigen specific receptors which are essential to the immune response and are present on the cell surface of T lymphocytes. Recognize peptide-major histocompatibility (MH) (pMH) complexes that are displayed by antigen presenting cells (APC), a prerequisite for efficient T cell adaptive immunity against pathogens. Binding of alpha-beta TR to pMH complex initiates TR-CD3 clustering on the cell surface and intracellular activation of LCK that phosphorylates the ITAM motifs of CD3G, CD3D, CD3E and CD247 enabling the recruitment of ZAP70. In turn ZAP70 phosphorylates LAT, which recruits numerous signaling molecules to form the LAT signalosome. The LAT signalosome propagates signal branching to three major signaling pathways, the calcium, the mitogen-activated protein kinase (MAPK) kinase and the nuclear factor NF-kappa-B (NF-kB) pathways, leading to the mobilization of transcription factors that are critical for gene expression and essential for T cell growth and differentiation. The T cell repertoire is generated in the thymus, by V-(D)-J rearrangement. This repertoire is then shaped by intrathymic selection events to generate a peripheral T cell pool of self-MH restricted, non-autoaggressive T cells. Post-thymic interaction of alpha-beta TR with the pMH complexes shapes TR structural and functional avidity. This chain is T cell receptor alpha variable 40, found in Homo sapiens (Human).